The sequence spans 113 residues: Hydrogenase maturation factor HybF (113 aa).

Ni(2+)-binding residues include histidine 2 and glutamate 3. Positions 73, 76, 89, and 92 each coordinate Zn(2+).

The protein belongs to the HypA/HybF family. HybF subfamily. In terms of assembly, monomer.

Functionally, involved in the maturation of [NiFe] hydrogenases. Required for nickel insertion into the metal center of the hydrogenase. HybF is involved in maturation of hydrogenases 1 and 2. It may partially substitute for the function of HypA and vice versa. The polypeptide is Hydrogenase maturation factor HybF (Escherichia coli (strain K12)).